Here is a 150-residue protein sequence, read N- to C-terminus: Large ribosomal subunit protein uL11 (150 aa).

It belongs to the universal ribosomal protein uL11 family. Part of the ribosomal stalk of the 50S ribosomal subunit. Interacts with L10 and the large rRNA to form the base of the stalk. L10 forms an elongated spine to which L12 dimers bind in a sequential fashion forming a multimeric L10(L12)X complex. In terms of processing, one or more lysine residues are methylated.

Forms part of the ribosomal stalk which helps the ribosome interact with GTP-bound translation factors. The sequence is that of Large ribosomal subunit protein uL11 from Cereibacter sphaeroides (strain ATCC 17025 / ATH 2.4.3) (Rhodobacter sphaeroides).